The primary structure comprises 200 residues: Interleukin 17-like protein (200 aa).

The N-terminal stretch at 1 to 26 (MGNFFLFAMTLVVCSVIVLLTGVADS) is a signal peptide. N-linked (GlcNAc...) asparagine glycosylation is present at Asn-46. Disulfide bonds link Cys-122-Cys-175 and Cys-127-Cys-177. Asn-192 is a glycosylation site (N-linked (GlcNAc...) asparagine).

It belongs to the IL-17 family. In terms of tissue distribution, expressed in several tissues including hemocytes, gills, mantle, adductor muscle, labial palps, digestive glands and heart with highest levels in gills and lowest levels in adductor muscle and heart.

Its subcellular location is the secreted. The polypeptide is Interleukin 17-like protein (Magallana gigas (Pacific oyster)).